Here is a 373-residue protein sequence, read N- to C-terminus: Secondary metabolism regulator laeA (373 aa).

The interval 55–81 is disordered; it reads ERDPAAGRWHANGSPSINSTSSKNPDR. The segment covering 67 to 77 has biased composition (polar residues); the sequence is GSPSINSTSSK.

This sequence belongs to the methyltransferase superfamily. LaeA methyltransferase family. Component of the heterotrimeric velvet complex composed of laeA, veA and velB; VeA acting as a bridging protein between laeA and velB.

The protein localises to the nucleus. It catalyses the reaction L-methionyl-[protein] + S-adenosyl-L-methionine = S-methyl-L-methionyl-[protein] + S-adenosyl-L-homocysteine. Its function is as follows. Methyltransferase that performs automethylation. No other methyl-accepting substrate has been identified yet. Component of the velvet transcription factor complex that acts as a global regulator for secondary metabolite gene expression. Positively controls expression of 20% to 40% of major classes of secondary metabolite biosynthesis genes such as nonribosomal peptide synthetases, polyketide synthases, and P450 monooxygenases. Controls the expression of the gliotoxin gene cluster. Controls the expression of the fumitremorgin, fumagillin, and pseurotin gene clusters, where genes for fumagillin and pseurotin are physically intertwined in a single supercluster. Regulates the biosynthetic genes required for endocrocin production. Secondary metabolites under the transcriptional regulation of laeA are necessary for inhibition of angiogenesis during invasive infection in mice. Controls the expression of cell surface rodA, a hydrophobin that acts as an antiphagocytic molecule. Also regulates the expression of genes involved in conidial biosynthesis. The polypeptide is Secondary metabolism regulator laeA (Aspergillus fumigatus (strain ATCC MYA-4609 / CBS 101355 / FGSC A1100 / Af293) (Neosartorya fumigata)).